The chain runs to 147 residues: Large ribosomal subunit protein bL9 (147 aa).

Belongs to the bacterial ribosomal protein bL9 family.

In terms of biological role, binds to the 23S rRNA. The sequence is that of Large ribosomal subunit protein bL9 from Gemmatimonas aurantiaca (strain DSM 14586 / JCM 11422 / NBRC 100505 / T-27).